The sequence spans 53 residues: Large ribosomal subunit protein eL40 (53 aa).

It belongs to the eukaryotic ribosomal protein eL40 family.

The polypeptide is Large ribosomal subunit protein eL40 (Pyrobaculum calidifontis (strain DSM 21063 / JCM 11548 / VA1)).